The sequence spans 323 residues: Leucine-rich repeat-containing protein 46 (323 aa).

4 LRR repeats span residues 49–70 (ELET…EKLR), 71–92 (NIHS…ACIT), 93–114 (SLRF…LDLQ), and 115–135 (YLQF…DELP). Residues 146–188 (NPCTNQEGYRKMVIGALPLLLDLDKQPILERWTSDEEDKSSDD) form the LRRCT domain. Thr178 bears the Phosphothreonine mark. Phosphoserine is present on residues Ser179, Ser185, and Ser186. Positions 203 to 228 (RGFFKDLEQELHQHQERRQQAALTEH) form a coiled coil. The tract at residues 249-323 (MAGDCSSTAT…TKMTNKKSTK (75 aa)) is disordered. The span at 267-316 (PKATSSTQTASTTKKQVSKNQKSSVQARKGALAATTSKTSQAATPSMTKM) shows a compositional bias: low complexity. The residue at position 303 (Ser303) is a Phosphoserine.

In terms of tissue distribution, testis-specific (at protein level).

It is found in the cell projection. The protein localises to the cilium. It localises to the flagellum. In terms of biological role, required for normal spermatogenesis and male fertility. Plays an important role in sperm flagellum biogenesis. This chain is Leucine-rich repeat-containing protein 46 (Lrrc46), found in Mus musculus (Mouse).